The primary structure comprises 181 residues: CDP-diacylglycerol--glycerol-3-phosphate 3-phosphatidyltransferase (181 aa).

Transmembrane regions (helical) follow at residues 8–28, 35–55, 64–84, and 148–168; these read PNYL…TFYI, MLGA…GYIA, FGKM…IIML, and IIYL…LTII.

The protein belongs to the CDP-alcohol phosphatidyltransferase class-I family.

The protein resides in the cell membrane. It carries out the reaction a CDP-1,2-diacyl-sn-glycerol + sn-glycerol 3-phosphate = a 1,2-diacyl-sn-glycero-3-phospho-(1'-sn-glycero-3'-phosphate) + CMP + H(+). It participates in phospholipid metabolism; phosphatidylglycerol biosynthesis; phosphatidylglycerol from CDP-diacylglycerol: step 1/2. In terms of biological role, this protein catalyzes the committed step to the synthesis of the acidic phospholipids. This chain is CDP-diacylglycerol--glycerol-3-phosphate 3-phosphatidyltransferase (pgsA), found in Rickettsia bellii (strain RML369-C).